Consider the following 498-residue polypeptide: WD repeat-containing protein 55 homolog (498 aa).

The tract at residues 1-131 (MHTHNNFKTP…ATFDLDEDDE (131 aa)) is disordered. 2 stretches are compositionally biased toward acidic residues: residues 12-23 (DEDELDDLDEDM) and 31-48 (IEQEVLNESDSDNDEYDL). Low complexity-rich tracts occupy residues 67 to 82 (NDSSSSDDSFDPNAAD) and 93 to 103 (AGGVTAGGATS). WD repeat units lie at residues 154 to 193 (KLEDFITDICFHPDRDIIALATIIGDVHLYEYDNEANKLL), 198 to 237 (VHSKACRDVEFTEDGRFLLTCSKDKCVMVTDMETEKLKKL), 241 to 279 (AHDDAINTLHVLNENLFASGDDAGTVKLWDLRTKNAIFE), 282 to 321 (ELEDQITQLTTNEQSKLLLATSADGYLTTFNISARKMYVQ), 324 to 363 (PYEEELNCMGVYRGDSKLVVGTSKGRLYTYNWGQFGYHCD), and 408 to 447 (QHNMPIESLDVNASGELIASSSHNNDVRFWNVKYFEDFGD). Positions 478–498 (DLTKENADGDDDPGAGPSNMA) are disordered.

The protein belongs to the WD repeat WDR55 family.

This chain is WD repeat-containing protein 55 homolog, found in Drosophila melanogaster (Fruit fly).